The following is a 401-amino-acid chain: Probable peptidoglycan glycosyltransferase FtsW (401 aa).

The Cytoplasmic portion of the chain corresponds to 1–26 (MAEVLRWLRLDLGQSGGLAWERLDWR). Residues 27-47 (LALTVLALAGLGLVMVGSASV) form a helical membrane-spanning segment. The Periplasmic segment spans residues 48-65 (SIAEGATGDPLHYLYRQA). A helical membrane pass occupies residues 66–86 (VFLAVALMAAVACLHLSLDQF). Residues 87–88 (YR) are Cytoplasmic-facing. Residues 89-109 (GGPVLLVLGFFLLLVVLIPGV) traverse the membrane as a helical segment. The Periplasmic portion of the chain corresponds to 110–118 (GREVNGATR). The chain crosses the membrane as a helical span at residues 119-139 (WIPLGLINLQVAEVARVCFII). Over 140–154 (YLAGYCVRRHAELPN) the chain is Cytoplasmic. The chain crosses the membrane as a helical span at residues 155–175 (TSSAFAVPLAVFSLAAVLLLA). Residues 176–180 (QPDFG) lie on the Periplasmic side of the membrane. The helical transmembrane segment at 181-201 (TALVLMATALGLLFLAGASLW) threads the bilayer. Position 202 (Arg-202) is a topological domain, cytoplasmic. The helical transmembrane segment at 203 to 223 (IGVLGLLLAGAAWLLIVGSPY) threads the bilayer. Topologically, residues 224–278 (RWQRLTTFTDPWADPFNAGFQLTQSLIAIGRGEWFGVGLGASVQKLFYLPEAHTD) are periplasmic. A helical membrane pass occupies residues 279-299 (FLFAVLAEELGLLGVVVVVAL). Residues 300-322 (FTYLAWRGMQIGLASLRADRPFG) are Cytoplasmic-facing. A helical membrane pass occupies residues 323–343 (AYLAWGLTISIGLQAFINMAV). Topologically, residues 344–354 (TMGLLPTKGLT) are periplasmic. A helical membrane pass occupies residues 355–375 (LPLMSYGGSSLIMTGIALALL). The Cytoplasmic segment spans residues 376–401 (LRVDYEARLAAQQPRPRKRPSGRVRP).

It belongs to the SEDS family. FtsW subfamily.

It is found in the cell inner membrane. The catalysed reaction is [GlcNAc-(1-&gt;4)-Mur2Ac(oyl-L-Ala-gamma-D-Glu-L-Lys-D-Ala-D-Ala)](n)-di-trans,octa-cis-undecaprenyl diphosphate + beta-D-GlcNAc-(1-&gt;4)-Mur2Ac(oyl-L-Ala-gamma-D-Glu-L-Lys-D-Ala-D-Ala)-di-trans,octa-cis-undecaprenyl diphosphate = [GlcNAc-(1-&gt;4)-Mur2Ac(oyl-L-Ala-gamma-D-Glu-L-Lys-D-Ala-D-Ala)](n+1)-di-trans,octa-cis-undecaprenyl diphosphate + di-trans,octa-cis-undecaprenyl diphosphate + H(+). The protein operates within cell wall biogenesis; peptidoglycan biosynthesis. Functionally, peptidoglycan polymerase that is essential for cell division. The protein is Probable peptidoglycan glycosyltransferase FtsW of Alkalilimnicola ehrlichii (strain ATCC BAA-1101 / DSM 17681 / MLHE-1).